Consider the following 912-residue polypeptide: WD repeat-containing protein 44 (912 aa).

Disordered stretches follow at residues 206-352, 399-426, and 460-481; these read DIIE…ELTD, SNDA…LKQK, and RDEV…GMPY. Residues 236–258 are compositionally biased toward pro residues; it reads NRPPQPINAPPPRPPPPARPAPP. A compositionally biased stretch (basic and acidic residues) spans 264 to 278; sequence GDTDFDRSSGFEYQK. A compositionally biased stretch (polar residues) spans 288-311; that stretch reads SPNTLTENMNRDSQPSLDLASATS. Over residues 410–422 the composition is skewed to basic and acidic residues; that stretch reads KPQSHQSETDGGK. Residues 469 to 478 are compositionally biased toward acidic residues; the sequence is DDPSSSDDEG. Residues 511-550 form a WD 1 repeat; that stretch reads EHVGAVWTMKFSHCGRLLASAGQDNVVRIWVLKNAFDYFN. Residues 559 to 594 form a disordered region; that stretch reads EGRVSPSPSQESLNSSKSDTDGGVFSGTDDVDPDDK. The segment covering 563-575 has biased composition (low complexity); the sequence is SPSPSQESLNSSK. WD repeat units lie at residues 608–646, 648–688, 693–732, 743–782, 787–826, 841–880, and 882–912; these read GHTA…CLCC, QHID…VALW, GQTK…YHTQ, RVGR…LSMK, VNSS…SKFT, AHNA…ENIP, and GALK…KNIS. The tract at residues 861 to 882 is disordered; that stretch reads AETSSEKQEGDQAEPVENIPSG.

The protein resides in the cytoplasm. Its subcellular location is the cytosol. The protein localises to the perinuclear region. It is found in the endosome membrane. It localises to the golgi apparatus. The protein resides in the trans-Golgi network. In terms of biological role, downstream effector for rab11. May be involved in vesicle recycling. May also be involved in the inhibition of the intracellular ciliogenesis pathway. The sequence is that of WD repeat-containing protein 44 (wdr44) from Xenopus laevis (African clawed frog).